Here is a 263-residue protein sequence, read N- to C-terminus: Isatin hydrolase (263 aa).

Residue 62 to 66 (FFAWN) participates in substrate binding. Mn(2+) contacts are provided by histidine 73, histidine 77, and aspartate 79. Histidine 83 serves as the catalytic Proton donor/acceptor. Position 212 (histidine 212) interacts with substrate.

This sequence belongs to the Cyclase 1 superfamily. In terms of assembly, homodimer. The cofactor is Mn(2+).

It catalyses the reaction isatin + H2O = isatinate + H(+). With respect to regulation, inhibited by thioisatinate. In terms of biological role, involved in the degradation of the plant hormone indole-3-acetic acid (IAA). Catalyzes the hydrolysis of the cyclic amide bond (lactam) of isatin (1H-indole-2,3-dione) to yield isatinate (2-(2-aminophenyl)-2-oxoacetate). This Roseibium aggregatum (strain ATCC 25650 / DSM 13394 / JCM 20685 / NBRC 16684 / NCIMB 2208 / IAM 12614 / B1) (Stappia aggregata) protein is Isatin hydrolase.